We begin with the raw amino-acid sequence, 129 residues long: Succinate dehydrogenase assembly factor 3, mitochondrial (129 aa).

The protein belongs to the complex I LYR family. SDHAF3 subfamily. Interacts with the iron-sulfur protein subunit within the SDH catalytic dimer.

The protein resides in the mitochondrion matrix. Functionally, plays an essential role in the assembly of succinate dehydrogenase (SDH), an enzyme complex (also referred to as respiratory complex II) that is a component of both the tricarboxylic acid (TCA) cycle and the mitochondrial electron transport chain, and which couples the oxidation of succinate to fumarate with the reduction of ubiquinone (coenzyme Q) to ubiquinol. Promotes maturation of the iron-sulfur protein subunit of the SDH catalytic dimer, protecting it from the deleterious effects of oxidants. May act together with SDHAF1. The polypeptide is Succinate dehydrogenase assembly factor 3, mitochondrial (Aspergillus fumigatus (strain ATCC MYA-4609 / CBS 101355 / FGSC A1100 / Af293) (Neosartorya fumigata)).